A 561-amino-acid chain; its full sequence is Transmembrane protein 151B (561 aa).

The segment covering 1-10 (MSPPGSAAGE) has biased composition (low complexity). A disordered region spans residues 1–42 (MSPPGSAAGESAGGGGGGGGSGVPEEPMASADEGPAREEQRP). The segment covering 11 to 22 (SAGGGGGGGGSG) has biased composition (gly residues). The next 2 helical transmembrane spans lie at 59-79 (CLLLSLLMYGCLGAVAWCHVT) and 106-126 (YVYIPLAFLLMLYAVYLVECW). Residues 489–507 (VNEASCPTEQTRLSSQASM) are compositionally biased toward polar residues. The tract at residues 489–523 (VNEASCPTEQTRLSSQASMRDNEEDEDEEEAGPPP) is disordered. Acidic residues predominate over residues 510 to 519 (NEEDEDEEEA).

This sequence belongs to the TMEM151 family.

It localises to the membrane. This Mus musculus (Mouse) protein is Transmembrane protein 151B (Tmem151b).